We begin with the raw amino-acid sequence, 83 residues long: Cytochrome b559 subunit alpha (83 aa).

The helical transmembrane segment at 21–35 (VIHSITIPSLFIAGW) threads the bilayer. Position 23 (His-23) interacts with heme.

This sequence belongs to the PsbE/PsbF family. As to quaternary structure, heterodimer of an alpha subunit and a beta subunit. PSII is composed of 1 copy each of membrane proteins PsbA, PsbB, PsbC, PsbD, PsbE, PsbF, PsbH, PsbI, PsbJ, PsbK, PsbL, PsbM, PsbT, PsbX, PsbY, PsbZ, Psb30/Ycf12, at least 3 peripheral proteins of the oxygen-evolving complex and a large number of cofactors. It forms dimeric complexes. It depends on heme b as a cofactor.

The protein localises to the plastid. Its subcellular location is the chloroplast thylakoid membrane. Functionally, this b-type cytochrome is tightly associated with the reaction center of photosystem II (PSII). PSII is a light-driven water:plastoquinone oxidoreductase that uses light energy to abstract electrons from H(2)O, generating O(2) and a proton gradient subsequently used for ATP formation. It consists of a core antenna complex that captures photons, and an electron transfer chain that converts photonic excitation into a charge separation. The polypeptide is Cytochrome b559 subunit alpha (Ginkgo biloba (Ginkgo)).